Reading from the N-terminus, the 252-residue chain is Imidazole glycerol phosphate synthase subunit HisF (252 aa).

Active-site residues include Asp12 and Asp131.

Belongs to the HisA/HisF family. In terms of assembly, heterodimer of HisH and HisF.

Its subcellular location is the cytoplasm. It catalyses the reaction 5-[(5-phospho-1-deoxy-D-ribulos-1-ylimino)methylamino]-1-(5-phospho-beta-D-ribosyl)imidazole-4-carboxamide + L-glutamine = D-erythro-1-(imidazol-4-yl)glycerol 3-phosphate + 5-amino-1-(5-phospho-beta-D-ribosyl)imidazole-4-carboxamide + L-glutamate + H(+). Its pathway is amino-acid biosynthesis; L-histidine biosynthesis; L-histidine from 5-phospho-alpha-D-ribose 1-diphosphate: step 5/9. In terms of biological role, IGPS catalyzes the conversion of PRFAR and glutamine to IGP, AICAR and glutamate. The HisF subunit catalyzes the cyclization activity that produces IGP and AICAR from PRFAR using the ammonia provided by the HisH subunit. This Thermus thermophilus (strain ATCC BAA-163 / DSM 7039 / HB27) protein is Imidazole glycerol phosphate synthase subunit HisF.